The sequence spans 472 residues: Selenium-binding protein 2 (472 aa).

Ser-467 carries the post-translational modification Phosphoserine.

This sequence belongs to the selenium-binding protein family. Post-translationally, the N-terminus is blocked. Mainly expressed in liver.

It is found in the nucleus. The protein localises to the cytoplasm. Its subcellular location is the cytosol. It localises to the membrane. Its function is as follows. Selenium- and acetaminophen-binding protein which may be involved in the sensing of reactive xenobiotics in the cytoplasm. May be involved in intra-Golgi protein transport. The protein is Selenium-binding protein 2 (Selenbp2) of Mus musculus (Mouse).